Here is a 238-residue protein sequence, read N- to C-terminus: Probable transcriptional regulatory protein SpyM51586 (238 aa).

The protein belongs to the TACO1 family. YeeN subfamily.

Its subcellular location is the cytoplasm. In Streptococcus pyogenes serotype M5 (strain Manfredo), this protein is Probable transcriptional regulatory protein SpyM51586.